A 383-amino-acid chain; its full sequence is Guanine nucleotide-binding protein G(s) subunit alpha (383 aa).

Positions methionine 1–threonine 31 are disordered. Residue glycine 2 is the site of N-palmitoyl glycine attachment. A lipid anchor (S-palmitoyl cysteine) is attached at cysteine 3. The segment covering glycine 8–serine 17 has biased composition (polar residues). Residues glutamate 18–threonine 31 are compositionally biased toward basic and acidic residues. The region spanning alanine 43–leucine 383 is the G-alpha domain. The G1 motif stretch occupies residues arginine 46–threonine 59. GTP contacts are provided by residues glycine 51–serine 58, leucine 187–threonine 193, aspartate 212–glutamine 216, asparagine 281–aspartate 284, and alanine 355. The Mg(2+) site is built by serine 58 and threonine 193. Residues aspartate 185–threonine 193 form a G2 motif region. Positions phenylalanine 208 to arginine 217 are G3 motif. The tract at residues isoleucine 277–aspartate 284 is G4 motif. Residues threonine 353–threonine 358 are G5 motif.

The protein belongs to the G-alpha family. G(s) subfamily. As to quaternary structure, g proteins are composed of 3 units; alpha, beta and gamma. The alpha chain contains the guanine nucleotide binding site.

Its function is as follows. Guanine nucleotide-binding proteins (G proteins) are involved as modulators or transducers in various transmembrane signaling systems. The G(s) protein is involved in hormonal regulation of adenylate cyclase: it activates the cyclase. Participates in olfactory signal transduction. The sequence is that of Guanine nucleotide-binding protein G(s) subunit alpha from Anopheles gambiae (African malaria mosquito).